A 101-amino-acid chain; its full sequence is Small ribosomal subunit protein uS14 (101 aa).

This sequence belongs to the universal ribosomal protein uS14 family. In terms of assembly, part of the 30S ribosomal subunit. Contacts proteins S3 and S10.

In terms of biological role, binds 16S rRNA, required for the assembly of 30S particles and may also be responsible for determining the conformation of the 16S rRNA at the A site. The protein is Small ribosomal subunit protein uS14 of Serratia proteamaculans (strain 568).